The primary structure comprises 449 residues: Glycine receptor subunit alpha-2 (449 aa).

Positions 1–27 (MTRPSVKLLTTLLACLMEMLNFRVSSG) are cleaved as a signal peptide. The Extracellular segment spans residues 28–255 (KDPDLLSSSS…FHLERQMGYY (228 aa)). The N-linked (GlcNAc...) asparagine glycan is linked to asparagine 70. Arginine 97 and serine 161 together coordinate glycine. Position 97 (arginine 97) interacts with strychnine. Cysteine 170 and cysteine 184 form a disulfide bridge. Zn(2+) is bound by residues glutamate 224 and aspartate 226. Cysteine 230 and cysteine 241 are joined by a disulfide. Residue threonine 236 coordinates glycine. Histidine 247 contributes to the Zn(2+) binding site. Residues 256–276 (LIQMYIPSLLIVILSWVSFWI) form a helical membrane-spanning segment. Residues 277 to 282 (NMDAAP) are Cytoplasmic-facing. The helical transmembrane segment at 283 to 302 (ARVALGITTVLTMTTQSSGS) threads the bilayer. At 303–313 (RASLPKVSYVK) the chain is on the extracellular side. Residues 314–334 (AIDIWMAVCLLFVFAALLEYA) form a helical membrane-spanning segment. At 335-420 (GVNFVSRQQK…RAKRIDTISR (86 aa)) the chain is on the cytoplasmic side. A helical membrane pass occupies residues 421-441 (AAFPLAFLIFNVFYWITYKII). The Extracellular segment spans residues 442–449 (RHESARKD).

It belongs to the ligand-gated ion channel (TC 1.A.9) family.

It is found in the postsynaptic cell membrane. It localises to the synapse. Its subcellular location is the cell membrane. The protein resides in the cell projection. It catalyses the reaction chloride(in) = chloride(out). Channel opening is triggered by extracellular glycine. Channel opening is also triggered by taurine and beta-alanine. Inhibited by strychnine. Subunit of heteromeric glycine-gated chloride channels. Plays a role in synaptic plasticity. Contributes to the generation of inhibitory postsynaptic currents, and is involved in the down-regulation of neuronal excitability. In Danio rerio (Zebrafish), this protein is Glycine receptor subunit alpha-2 (glra2).